Consider the following 503-residue polypeptide: Glycosyltransferase family 92 protein ZK381.2 (503 aa).

The helical transmembrane segment at 7 to 27 (YKPCLLIILIFNSVILLFILI) threads the bilayer. Residues 156-441 (KPVIICISPQ…FKCYFDSFYK (286 aa)) form the GT92 domain.

Belongs to the glycosyltransferase 92 family.

Its subcellular location is the membrane. The sequence is that of Glycosyltransferase family 92 protein ZK381.2 from Caenorhabditis elegans.